Here is a 126-residue protein sequence, read N- to C-terminus: UPF0235 protein C15orf40 homolog (126 aa).

Residues 1 to 33 (MPKKAGATSKGKNQTKEPETPPPPTGPVATDSK) form a disordered region. The residue at position 89 (S89) is a Phosphoserine.

Belongs to the UPF0235 family.

The sequence is that of UPF0235 protein C15orf40 homolog from Rattus norvegicus (Rat).